The primary structure comprises 266 residues: Proline-rich protein 23A (266 aa).

The segment covering 1–18 (MGSRPRSPSAFPAPWWGQ) has biased composition (low complexity). 2 disordered regions span residues 1 to 47 (MGSR…SLED) and 197 to 266 (EPCA…LFQE). Positions 227 to 238 (PSSPLQPLPPSP) are enriched in pro residues. The segment covering 255-266 (PPCKARRRLFQE) has biased composition (basic residues).

The protein belongs to the PRR23 family.

The polypeptide is Proline-rich protein 23A (PRR23A) (Homo sapiens (Human)).